The sequence spans 347 residues: Probable dual-specificity RNA methyltransferase RlmN (347 aa).

The Proton acceptor role is filled by E91. One can recognise a Radical SAM core domain in the interval 97–327 (YKYGNSICVS…ATVRREMGSD (231 aa)). C104 and C332 form a disulfide bridge. C111, C115, and C118 together coordinate [4Fe-4S] cluster. Residues 158-159 (GE), S190, 213-215 (SLH), and N289 each bind S-adenosyl-L-methionine. C332 serves as the catalytic S-methylcysteine intermediate.

This sequence belongs to the radical SAM superfamily. RlmN family. It depends on [4Fe-4S] cluster as a cofactor.

The protein resides in the cytoplasm. The enzyme catalyses adenosine(2503) in 23S rRNA + 2 reduced [2Fe-2S]-[ferredoxin] + 2 S-adenosyl-L-methionine = 2-methyladenosine(2503) in 23S rRNA + 5'-deoxyadenosine + L-methionine + 2 oxidized [2Fe-2S]-[ferredoxin] + S-adenosyl-L-homocysteine. It catalyses the reaction adenosine(37) in tRNA + 2 reduced [2Fe-2S]-[ferredoxin] + 2 S-adenosyl-L-methionine = 2-methyladenosine(37) in tRNA + 5'-deoxyadenosine + L-methionine + 2 oxidized [2Fe-2S]-[ferredoxin] + S-adenosyl-L-homocysteine. Functionally, specifically methylates position 2 of adenine 2503 in 23S rRNA and position 2 of adenine 37 in tRNAs. In Clostridium perfringens (strain 13 / Type A), this protein is Probable dual-specificity RNA methyltransferase RlmN.